Consider the following 173-residue polypeptide: Regulatory protein RecX (173 aa).

Belongs to the RecX family.

It localises to the cytoplasm. Its function is as follows. Modulates RecA activity. The polypeptide is Regulatory protein RecX (Mycobacterium marinum (strain ATCC BAA-535 / M)).